Consider the following 1455-residue polypeptide: Nik-related protein kinase (1455 aa).

One can recognise a Protein kinase domain in the interval Phe-25–Val-313. ATP is bound by residues Ile-31–Ile-39 and Lys-54. Asp-177 acts as the Proton acceptor in catalysis. 2 disordered regions span residues Leu-385–Gln-404 and Thr-471–Glu-568. The segment covering Thr-471–Glu-480 has biased composition (polar residues). Over residues Glu-494–Asp-505 the composition is skewed to basic and acidic residues. Residues Gln-520–Gln-531 are compositionally biased toward low complexity. The segment covering Pro-540–Glu-568 has biased composition (acidic residues). Positions Arg-716–Val-750 form a coiled coil. Disordered stretches follow at residues Ile-760–Ser-854 and Ala-1029–Ser-1080. Residues Ser-847 and Ser-850 each carry the phosphoserine modification. Residues Ala-1029–Gly-1038 show a composition bias toward low complexity. Residues Arg-1044–Glu-1078 are compositionally biased toward basic and acidic residues. The CNH domain occupies Ser-1138–Met-1425.

It belongs to the protein kinase superfamily. STE Ser/Thr protein kinase family. STE20 subfamily.

It catalyses the reaction L-seryl-[protein] + ATP = O-phospho-L-seryl-[protein] + ADP + H(+). It carries out the reaction L-threonyl-[protein] + ATP = O-phospho-L-threonyl-[protein] + ADP + H(+). Functionally, may phosphorylate cofilin-1 and induce actin polymerization through this process, during the late stages of embryogenesis. Involved in the TNF-alpha-induced signaling pathway. The sequence is that of Nik-related protein kinase (Nrk) from Mus musculus (Mouse).